Consider the following 358-residue polypeptide: Adenosine deaminase (358 aa).

Zn(2+) is bound by residues His14 and His16. Substrate contacts are provided by His16, Asp18, and Gly183. His212 is a Zn(2+) binding site. Catalysis depends on Glu215, which acts as the Proton donor. Residue Asp294 coordinates Zn(2+). Position 295 (Asp295) interacts with substrate.

It belongs to the metallo-dependent hydrolases superfamily. Adenosine and AMP deaminases family. Zn(2+) serves as cofactor.

It is found in the cell membrane. The protein resides in the cell junction. The protein localises to the cytoplasmic vesicle lumen. Its subcellular location is the cytoplasm. It localises to the lysosome. It carries out the reaction adenosine + H2O + H(+) = inosine + NH4(+). The catalysed reaction is 2'-deoxyadenosine + H2O + H(+) = 2'-deoxyinosine + NH4(+). In terms of biological role, catalyzes the hydrolytic deamination of adenosine and 2-deoxyadenosine. Plays an important role in purine metabolism and in adenosine homeostasis. Modulates signaling by extracellular adenosine, and so contributes indirectly to cellular signaling events. May act as a positive regulator of T-cell coactivation. The polypeptide is Adenosine deaminase (ada) (Xenopus tropicalis (Western clawed frog)).